The primary structure comprises 425 residues: Dihydroorotase (425 aa).

The Zn(2+) site is built by His-60 and His-62. Residues 62–64 (HLR) and Asn-94 each bind substrate. Zn(2+)-binding residues include Asp-152, His-179, and His-232. Asn-278 is a substrate binding site. Asp-305 serves as a coordination point for Zn(2+). The active site involves Asp-305. His-309 lines the substrate pocket.

Belongs to the metallo-dependent hydrolases superfamily. DHOase family. Class I DHOase subfamily. The cofactor is Zn(2+).

It carries out the reaction (S)-dihydroorotate + H2O = N-carbamoyl-L-aspartate + H(+). It functions in the pathway pyrimidine metabolism; UMP biosynthesis via de novo pathway; (S)-dihydroorotate from bicarbonate: step 3/3. In terms of biological role, catalyzes the reversible cyclization of carbamoyl aspartate to dihydroorotate. The polypeptide is Dihydroorotase (Syntrophotalea carbinolica (strain DSM 2380 / NBRC 103641 / GraBd1) (Pelobacter carbinolicus)).